The primary structure comprises 87 residues: Conotoxin Cl12.3 (87 aa).

A signal peptide spans 1-19 (MKLTCVLVVLLLFLPYGDL). Positions 20–42 (ITNNYIGGAARKVTPWRRNLKTR) are excised as a propeptide.

The protein belongs to the conotoxin O1 superfamily. In terms of processing, contains 4 disulfide bonds. In terms of tissue distribution, expressed by the venom duct.

It is found in the secreted. In Californiconus californicus (California cone), this protein is Conotoxin Cl12.3.